Consider the following 766-residue polypeptide: Ubiquitin carboxyl-terminal hydrolase creB (766 aa).

The disordered stretch occupies residues 1–32 (MGSFLKSFRKDVGSAAPSVGAPPAKKEPQPLP). Residues 13 to 23 (GSAAPSVGAPP) are compositionally biased toward low complexity. Residues 55-466 (YGMENFGNTC…CAYVLFYQET (412 aa)) enclose the USP domain. The active-site Nucleophile is Cys64. 2 disordered regions span residues 115 to 145 (EALA…KDSP) and 243 to 266 (ESPQ…SRTP). The span at 249–263 (SDVSDSVIPSSSSGS) shows a compositional bias: low complexity. The active-site Proton acceptor is His417. Positions 526–752 (APTAPQLSTH…HDRSSHGKWR (227 aa)) are disordered. The segment covering 548 to 572 (SPAPDPAPLTSLPPIPPIPETPPAP) has biased composition (pro residues). Residues 573–620 (LTSRKSDLQSKKERVKEEKERKAAEKEKEKQRRKEIETRLKDRQRRED) are a coiled coil. Composition is skewed to basic and acidic residues over residues 576–643 (RKSD…RNHA) and 734–747 (EQEH…DRSS).

It belongs to the peptidase C19 family. As to quaternary structure, interacts with creA, creC and qutD.

The enzyme catalyses Thiol-dependent hydrolysis of ester, thioester, amide, peptide and isopeptide bonds formed by the C-terminal Gly of ubiquitin (a 76-residue protein attached to proteins as an intracellular targeting signal).. Its function is as follows. Ubiquitin thioesterase component of the regulatory network controlling carbon source utilization through ubiquitination and deubiquitination involving creA, creB, creC, creD and acrB. Deubiquitinates the creA catabolic repressor and the quinate permease qutD. Also plays a role in response to carbon starvation and the control of extracellular proteases activity. The polypeptide is Ubiquitin carboxyl-terminal hydrolase creB (creB) (Emericella nidulans (strain FGSC A4 / ATCC 38163 / CBS 112.46 / NRRL 194 / M139) (Aspergillus nidulans)).